The chain runs to 279 residues: Large ribosomal subunit protein uL2 (279 aa).

The segment at 216–279 is disordered; that stretch reads KRPSVRGVVM…IQKRKRNRNR (64 aa). Basic residues predominate over residues 270-279; it reads IQKRKRNRNR.

Belongs to the universal ribosomal protein uL2 family. As to quaternary structure, part of the 50S ribosomal subunit. Forms a bridge to the 30S subunit in the 70S ribosome.

Its function is as follows. One of the primary rRNA binding proteins. Required for association of the 30S and 50S subunits to form the 70S ribosome, for tRNA binding and peptide bond formation. It has been suggested to have peptidyltransferase activity; this is somewhat controversial. Makes several contacts with the 16S rRNA in the 70S ribosome. In Leptospira interrogans serogroup Icterohaemorrhagiae serovar copenhageni (strain Fiocruz L1-130), this protein is Large ribosomal subunit protein uL2.